Consider the following 77-residue polypeptide: Envelope glycoprotein (77 aa).

Residues 1–24 (LERQKNQNWYEGWFNSSPWFTTLL) lie on the Extracellular side of the membrane. Residues 25–45 (STIAGPLLLLLLLLILGPCII) form a helical membrane-spanning segment. The S-palmitoyl cysteine; by host moiety is linked to residue C43. Topologically, residues 46 to 77 (NRLVQFINNRVSAVKILVLRQKYQTLDNEDNL) are cytoplasmic. The YXXL motif; contains endocytosis signal signature appears at 68 to 71 (YQTL).

As to quaternary structure, the mature envelope protein (Env) consists of a trimer of SU-TM heterodimers attached by noncovalent interactions or by a labile interchain disulfide bond. Post-translationally, specific enzymatic cleavages in vivo yield mature proteins. Envelope glycoproteins are synthesized as an inactive precursor that is N-glycosylated and processed likely by host cell furin or by a furin-like protease in the Golgi to yield the mature SU and TM proteins. The cleavage site between SU and TM requires the minimal sequence [KR]-X-[KR]-R. The R-peptide is released from the C-terminus of the cytoplasmic tail of the TM protein upon particle formation as a result of proteolytic cleavage by the viral protease. Cleavage of this peptide is required for TM to become fusogenic. In terms of processing, the transmembrane protein is palmitoylated. The R-peptide is palmitoylated.

It is found in the virion membrane. It localises to the host cell membrane. The surface protein (SU) attaches the virus to the host cell by binding to its receptor. This interaction triggers the refolding of the transmembrane protein (TM) and is thought to activate its fusogenic potential by unmasking its fusion peptide. Fusion occurs at the host cell plasma membrane. Functionally, the transmembrane protein (TM) acts as a class I viral fusion protein. Under the current model, the protein has at least 3 conformational states: pre-fusion native state, pre-hairpin intermediate state, and post-fusion hairpin state. During viral and target cell membrane fusion, the coiled coil regions (heptad repeats) assume a trimer-of-hairpins structure, positioning the fusion peptide in close proximity to the C-terminal region of the ectodomain. The formation of this structure appears to drive apposition and subsequent fusion of viral and target cell membranes. Membranes fusion leads to delivery of the nucleocapsid into the cytoplasm. This chain is Envelope glycoprotein (env), found in Woolly monkey sarcoma virus (WMSV).